The sequence spans 382 residues: Ferredoxin--NADP reductase, root isozyme 2, chloroplastic (382 aa).

The N-terminal 64 residues, methionine 1–isoleucine 64, are a transit peptide targeting the chloroplast. Residues lysine 97–leucine 225 form the FAD-binding FR-type domain. A disulfide bridge links cysteine 200 with cysteine 205. Serine 201 carries the phosphoserine modification. Threonine 233 carries the phosphothreonine modification. Isoleucine 235–methionine 253 is a binding site for NADP(+).

It belongs to the ferredoxin--NADP reductase type 1 family. It depends on FAD as a cofactor. In terms of tissue distribution, expressed in shoots and roots. More abundant in roots than RFNR1.

It localises to the plastid. The protein resides in the chloroplast. The catalysed reaction is 2 reduced [2Fe-2S]-[ferredoxin] + NADP(+) + H(+) = 2 oxidized [2Fe-2S]-[ferredoxin] + NADPH. Its function is as follows. Maintains the supply of reduced ferredoxin under non-photosynthetic conditions. In Arabidopsis thaliana (Mouse-ear cress), this protein is Ferredoxin--NADP reductase, root isozyme 2, chloroplastic (RFNR2).